The sequence spans 231 residues: uncharacterized protein (231 aa).

This is an uncharacterized protein from Haemophilus influenzae (strain ATCC 51907 / DSM 11121 / KW20 / Rd).